Here is a 219-residue protein sequence, read N- to C-terminus: 7-carboxy-7-deazaguanine synthase (219 aa).

Residues 12–14 (IQG) and Arg-27 contribute to the substrate site. The Radical SAM core domain occupies 18 to 219 (YTGTPSIFIR…VQIHKYLKIR (202 aa)). Cys-31, Cys-35, and Cys-38 together coordinate [4Fe-4S] cluster. Residue Thr-40 coordinates Mg(2+). Substrate is bound at residue Thr-92. Residues Gly-94 and 136-138 (SPK) contribute to the S-adenosyl-L-methionine site.

This sequence belongs to the radical SAM superfamily. 7-carboxy-7-deazaguanine synthase family. In terms of assembly, homodimer. It depends on [4Fe-4S] cluster as a cofactor. The cofactor is S-adenosyl-L-methionine. Requires Mg(2+) as cofactor.

The enzyme catalyses 6-carboxy-5,6,7,8-tetrahydropterin + H(+) = 7-carboxy-7-deazaguanine + NH4(+). Its pathway is purine metabolism; 7-cyano-7-deazaguanine biosynthesis. In terms of biological role, catalyzes the complex heterocyclic radical-mediated conversion of 6-carboxy-5,6,7,8-tetrahydropterin (CPH4) to 7-carboxy-7-deazaguanine (CDG), a step common to the biosynthetic pathways of all 7-deazapurine-containing compounds. The sequence is that of 7-carboxy-7-deazaguanine synthase from Buchnera aphidicola subsp. Schizaphis graminum (strain Sg).